The following is a 300-amino-acid chain: Protein FANTASTIC FOUR 4 (300 aa).

Polar residues predominate over residues 30 to 56 (PQLSTPLKSHFQNSSIAPQDNPITINA). Disordered regions lie at residues 30 to 104 (PQLS…SPSS), 142 to 170 (TMET…LPPP), and 227 to 264 (TETK…KEEE). Composition is skewed to low complexity over residues 58 to 88 (SLPS…NSSS) and 142 to 151 (TMETRTTSTT). The FAF domain maps to 166 to 217 (SLPPPLTSMIGFDCIEVKSHRENGRLVMMATRPPPRNRCLQDRSNGCVRLAI). Residues 233–262 (KEEEEEETIETVRDNEEEIPEYKEEEEEKE) are compositionally biased toward acidic residues.

The protein belongs to the fantastic four family. In terms of tissue distribution, expressed in the shoot apex and young siliques. Detected in provascular and vascular tissue, but not in the vegetative meristem. In inflorescences, restricted to the base of the flower and to the vasculature of the stem and the pedicels, but absent from young flowers. Detected in the center of the inflorescence meristem.

Regulates the size of the shoot meristem by modulating the CLV3-WUS feedback loop. Can repress WUS but is under negative control by CLV3. In Arabidopsis thaliana (Mouse-ear cress), this protein is Protein FANTASTIC FOUR 4 (FAF4).